A 507-amino-acid chain; its full sequence is Histidine ammonia-lyase (507 aa).

A cross-link (5-imidazolinone (Ala-Gly)) is located at residues 140-142 (ASG). A 2,3-didehydroalanine (Ser) modification is found at S141.

The protein belongs to the PAL/histidase family. In terms of processing, contains an active site 4-methylidene-imidazol-5-one (MIO), which is formed autocatalytically by cyclization and dehydration of residues Ala-Ser-Gly.

It localises to the cytoplasm. It catalyses the reaction L-histidine = trans-urocanate + NH4(+). It participates in amino-acid degradation; L-histidine degradation into L-glutamate; N-formimidoyl-L-glutamate from L-histidine: step 1/3. The protein is Histidine ammonia-lyase of Yersinia enterocolitica serotype O:8 / biotype 1B (strain NCTC 13174 / 8081).